A 281-amino-acid polypeptide reads, in one-letter code: MITSAHIDDIRTQVRAWRAKGETVAFVPTMGNLHQGHITLVKEAASKCDHVVASIFVNPMQFGQNEDLDAYPRTLAADSEALTAAGAELLFTPTPAVMYPKGLEQQTYVEVPGISNVLCGASRPGHFRGVATIVCKLFNIVQPDVALFGNKDYQQLLVIKTMVEDLSLPIEIIGVDTIREDSGLAMSSRNGYLTAAEKAAAPALKQAIDAMAAGIKQGESFEQVTEQAKASLIAAGFTPDYLEIRHAHTLEQAQNQHQALVILTAAYIGKARLIDNLRFDS.

An ATP-binding site is contributed by 30–37; that stretch reads MGNLHQGH. His37 (proton donor) is an active-site residue. A (R)-pantoate-binding site is contributed by Gln61. Gln61 is a beta-alanine binding site. Residue 149–152 participates in ATP binding; the sequence is GNKD. Gln155 serves as a coordination point for (R)-pantoate. ATP contacts are provided by residues Ile178 and 186–189; that span reads MSSR.

It belongs to the pantothenate synthetase family. As to quaternary structure, homodimer.

It is found in the cytoplasm. It catalyses the reaction (R)-pantoate + beta-alanine + ATP = (R)-pantothenate + AMP + diphosphate + H(+). It participates in cofactor biosynthesis; (R)-pantothenate biosynthesis; (R)-pantothenate from (R)-pantoate and beta-alanine: step 1/1. In terms of biological role, catalyzes the condensation of pantoate with beta-alanine in an ATP-dependent reaction via a pantoyl-adenylate intermediate. This chain is Pantothenate synthetase, found in Shewanella baltica (strain OS155 / ATCC BAA-1091).